The sequence spans 168 residues: Endoribonuclease YbeY (168 aa).

His-128, His-132, and His-138 together coordinate Zn(2+).

The protein belongs to the endoribonuclease YbeY family. It depends on Zn(2+) as a cofactor.

The protein resides in the cytoplasm. Its function is as follows. Single strand-specific metallo-endoribonuclease involved in late-stage 70S ribosome quality control and in maturation of the 3' terminus of the 16S rRNA. This is Endoribonuclease YbeY from Sphingopyxis alaskensis (strain DSM 13593 / LMG 18877 / RB2256) (Sphingomonas alaskensis).